A 234-amino-acid polypeptide reads, in one-letter code: 1-(5-phosphoribosyl)-5-[(5-phosphoribosylamino)methylideneamino] imidazole-4-carboxamide isomerase (234 aa).

D9 (proton acceptor) is an active-site residue. Residue D131 is the Proton donor of the active site.

Belongs to the HisA/HisF family.

The protein resides in the cytoplasm. It catalyses the reaction 1-(5-phospho-beta-D-ribosyl)-5-[(5-phospho-beta-D-ribosylamino)methylideneamino]imidazole-4-carboxamide = 5-[(5-phospho-1-deoxy-D-ribulos-1-ylimino)methylamino]-1-(5-phospho-beta-D-ribosyl)imidazole-4-carboxamide. It functions in the pathway amino-acid biosynthesis; L-histidine biosynthesis; L-histidine from 5-phospho-alpha-D-ribose 1-diphosphate: step 4/9. The sequence is that of 1-(5-phosphoribosyl)-5-[(5-phosphoribosylamino)methylideneamino] imidazole-4-carboxamide isomerase from Staphylococcus epidermidis (strain ATCC 12228 / FDA PCI 1200).